The chain runs to 197 residues: Protein SYM1 (197 aa).

Helical transmembrane passes span Ala20–Thr40, Ala55–Asn75, Val97–Met117, and Leu137–Leu157.

It belongs to the peroxisomal membrane protein PXMP2/4 family.

It localises to the mitochondrion inner membrane. May be involved in cellular response to stress. Required to maintain mitochondrial DNA (mtDNA) integrity and stability. Required for ethanol metabolism and tolerance during heat shock. This Saccharomyces cerevisiae (strain ATCC 204508 / S288c) (Baker's yeast) protein is Protein SYM1 (SYM1).